An 88-amino-acid polypeptide reads, in one-letter code: Cell division topological specificity factor (88 aa).

This sequence belongs to the MinE family.

In terms of biological role, prevents the cell division inhibition by proteins MinC and MinD at internal division sites while permitting inhibition at polar sites. This ensures cell division at the proper site by restricting the formation of a division septum at the midpoint of the long axis of the cell. This Aeromonas salmonicida (strain A449) protein is Cell division topological specificity factor.